Consider the following 107-residue polypeptide: L-rhamnose mutarotase (107 aa).

Tyr-18 serves as a coordination point for substrate. His-22 (proton donor) is an active-site residue. Substrate-binding positions include Tyr-41 and 76–77 (WW).

The protein belongs to the rhamnose mutarotase family. Homodimer.

Its subcellular location is the cytoplasm. The catalysed reaction is alpha-L-rhamnose = beta-L-rhamnose. It functions in the pathway carbohydrate metabolism; L-rhamnose metabolism. Involved in the anomeric conversion of L-rhamnose. This Paraburkholderia phytofirmans (strain DSM 17436 / LMG 22146 / PsJN) (Burkholderia phytofirmans) protein is L-rhamnose mutarotase.